Consider the following 874-residue polypeptide: Alanine--tRNA ligase (874 aa).

Residues H562, H566, C664, and H668 each coordinate Zn(2+).

This sequence belongs to the class-II aminoacyl-tRNA synthetase family. It depends on Zn(2+) as a cofactor.

It is found in the cytoplasm. The enzyme catalyses tRNA(Ala) + L-alanine + ATP = L-alanyl-tRNA(Ala) + AMP + diphosphate. Catalyzes the attachment of alanine to tRNA(Ala) in a two-step reaction: alanine is first activated by ATP to form Ala-AMP and then transferred to the acceptor end of tRNA(Ala). Also edits incorrectly charged Ser-tRNA(Ala) and Gly-tRNA(Ala) via its editing domain. The sequence is that of Alanine--tRNA ligase from Shewanella sp. (strain ANA-3).